Reading from the N-terminus, the 501-residue chain is ADP,ATP carrier protein 3 (501 aa).

The next 12 membrane-spanning stretches (helical) occupy residues 23-43 (LKLF…FGAL), 59-79 (IISL…TVLY), 90-110 (YIFY…AYII), 146-166 (YALM…LMFW), 183-203 (PVLG…LVFF), 227-247 (IMLQ…MLLF), 293-313 (IALL…PWKA), 326-346 (FNFM…FMVI), 361-381 (LLTP…IIFI), 383-403 (EIGA…VGAI), 446-466 (FGKS…PTAT), and 470-490 (IIIY…WNVI).

It belongs to the ADP/ATP translocase tlc family.

The protein localises to the cell membrane. Functionally, provides the rickettsial cell with host ATP in exchange for rickettsial ADP. This is an obligate exchange system. This energy acquiring activity is an important component of rickettsial parasitism. The protein is ADP,ATP carrier protein 3 (tlcC) of Rickettsia felis (strain ATCC VR-1525 / URRWXCal2) (Rickettsia azadi).